Here is a 468-residue protein sequence, read N- to C-terminus: Probable 1,4-beta-D-glucan cellobiohydrolase C (468 aa).

The first 18 residues, 1-18, serve as a signal peptide directing secretion; sequence MGRVSSLALALLLPAVQA. The 36-residue stretch at 19-54 folds into the CBM1 domain; that stretch reads QQTLWGQCGGIGWTGPTNCVAGAACSTQNPYYAQCL. Intrachain disulfides connect cysteine 26–cysteine 43 and cysteine 37–cysteine 53. The tract at residues 57–106 is thr-rich linker; the sequence is TATTSTTLTTTTRVTTTTTSTTSKSSSTGSTTTTKSTGTTTTSGSSTTIT. The tract at residues 68–107 is disordered; that stretch reads TRVTTTTTSTTSKSSSTGSTTTTKSTGTTTTSGSSTTITS. Residues 107-468 are catalytic; sequence SAPSGNPFSG…QLLKNANPAF (362 aa). The active site involves aspartate 198. 2 disulfide bridges follow: cysteine 199–cysteine 258 and cysteine 390–cysteine 437. Catalysis depends on aspartate 244, which acts as the Proton donor. Aspartate 423 acts as the Nucleophile in catalysis.

It belongs to the glycosyl hydrolase 6 (cellulase B) family.

It is found in the secreted. The enzyme catalyses Hydrolysis of (1-&gt;4)-beta-D-glucosidic linkages in cellulose and cellotetraose, releasing cellobiose from the non-reducing ends of the chains.. The biological conversion of cellulose to glucose generally requires three types of hydrolytic enzymes: (1) Endoglucanases which cut internal beta-1,4-glucosidic bonds; (2) Exocellobiohydrolases that cut the disaccharide cellobiose from the non-reducing end of the cellulose polymer chain; (3) Beta-1,4-glucosidases which hydrolyze the cellobiose and other short cello-oligosaccharides to glucose. In Aspergillus terreus (strain NIH 2624 / FGSC A1156), this protein is Probable 1,4-beta-D-glucan cellobiohydrolase C (cbhC).